The chain runs to 205 residues: SREBP regulating gene protein (205 aa).

The Cytoplasmic segment spans residues 1–16 (MALYVSMVWRKILRKR). A helical transmembrane segment spans residues 17-35 (WVLGVVFGLSLIYFLTSTF). Over 36 to 205 (KQEERTVRDR…GESPPELLPI (170 aa)) the chain is Lumenal. An N-linked (GlcNAc...) asparagine glycan is attached at Asn-67.

It belongs to the SPRING family.

Its subcellular location is the golgi apparatus membrane. Functionally, positively regulates hepatic SREBP signaling pathway by modulating the proper localization of SCAP (SREBP cleavage-activating protein) to the endoplasmic reticulum, thereby controlling the level of functional SCAP. The polypeptide is SREBP regulating gene protein (Xenopus laevis (African clawed frog)).